The chain runs to 378 residues: Opsin Rh4 (378 aa).

The Extracellular segment spans residues 1-53; sequence MEPLCNASEPPLRPEARSSGNGDLQFLGWNVPPDQIQYIPEHWLTQLEPPASM. N-linked (GlcNAc...) asparagine glycosylation occurs at asparagine 6. The chain crosses the membrane as a helical span at residues 54-78; it reads HYMLGVFYIFLFCASTVGNGMVIWI. Residues 79–90 are Cytoplasmic-facing; that stretch reads FSTSKSLRTPSN. A helical membrane pass occupies residues 91–111; it reads MFVLNLAVFDLIMCLKAPIFI. Topologically, residues 112–127 are extracellular; that stretch reads YNSFHRGFALGNTWCQ. Cysteine 126 and cysteine 203 form a disulfide bridge. The helical transmembrane segment at 128-148 threads the bilayer; sequence IFASIGSYSGIGAGMTNAAIG. At 149–167 the chain is on the cytoplasmic side; that stretch reads YDRYNVITKPMNRNMTFTK. Residues 168-192 form a helical membrane-spanning segment; that stretch reads AVIMNIIIWLYCTPWVVLPLTQFWD. The Extracellular portion of the chain corresponds to 193 to 216; the sequence is RFVPEGYLTSCSFDYLSDNFDTRL. Residues 217 to 244 form a helical membrane-spanning segment; the sequence is FVGTIFFFSFVCPTLMILYYYSQIVGHV. Residues 245–280 are Cytoplasmic-facing; it reads FSHEKALREQAKKMNVESLRSNVDKSKETAEIRIAK. A helical transmembrane segment spans residues 281-304; it reads AAITICFLFFVSWTPYGVMSLIGA. Residues 305–312 are Extracellular-facing; it reads FGDKSLLT. Residues 313 to 337 traverse the membrane as a helical segment; it reads PGATMIPACTCKLVACIDPFVYAIS. Lysine 324 carries the N6-(retinylidene)lysine modification. The Cytoplasmic segment spans residues 338–378; sequence HPRYRLELQKRCPWLGVNEKSGEISSAQSTTTQEQQQTTAA.

This sequence belongs to the G-protein coupled receptor 1 family. Opsin subfamily. Post-translationally, phosphorylated on some or all of the serine and threonine residues present in the C-terminal region.

It is found in the membrane. In terms of biological role, visual pigments are the light-absorbing molecules that mediate vision. They consist of an apoprotein, opsin, covalently linked to cis-retinal. The polypeptide is Opsin Rh4 (Rh4) (Drosophila melanogaster (Fruit fly)).